The following is a 32-amino-acid chain: Protamine S4 (32 aa).

A disordered region spans residues 1 to 32 (GCKKRKARKRPKCKKARKRPKCKRRKVAKKKC).

Testis.

The protein localises to the nucleus. The protein resides in the chromosome. Functionally, protamines substitute for histones in the chromatin of sperm during the haploid phase of spermatogenesis. They compact sperm DNA into a highly condensed, stable and inactive complex. The chain is Protamine S4 from Scyliorhinus canicula (Small-spotted catshark).